Consider the following 200-residue polypeptide: dTTP/UTP pyrophosphatase (200 aa).

The active-site Proton acceptor is D72.

This sequence belongs to the Maf family. YhdE subfamily. A divalent metal cation serves as cofactor.

The protein localises to the cytoplasm. It carries out the reaction dTTP + H2O = dTMP + diphosphate + H(+). The enzyme catalyses UTP + H2O = UMP + diphosphate + H(+). Nucleoside triphosphate pyrophosphatase that hydrolyzes dTTP and UTP. May have a dual role in cell division arrest and in preventing the incorporation of modified nucleotides into cellular nucleic acids. This chain is dTTP/UTP pyrophosphatase, found in Pseudomonas syringae pv. syringae (strain B728a).